Here is a 480-residue protein sequence, read N- to C-terminus: Cysteine--tRNA ligase (480 aa).

Zn(2+) is bound at residue C27. Residues P29 to N39 carry the 'HIGH' region motif. Zn(2+)-binding residues include C221, H246, and E250. Positions K278–S282 match the 'KMSKS' region motif. K281 is an ATP binding site.

It belongs to the class-I aminoacyl-tRNA synthetase family. In terms of assembly, monomer. Zn(2+) serves as cofactor.

Its subcellular location is the cytoplasm. The catalysed reaction is tRNA(Cys) + L-cysteine + ATP = L-cysteinyl-tRNA(Cys) + AMP + diphosphate. This chain is Cysteine--tRNA ligase, found in Borrelia garinii subsp. bavariensis (strain ATCC BAA-2496 / DSM 23469 / PBi) (Borreliella bavariensis).